The chain runs to 463 residues: Ribosomal protein uS12 methylthiotransferase RimO (463 aa).

Residues 15–130 (PKVGMVSLGC…VMQAVHSHLP (116 aa)) form the MTTase N-terminal domain. Residues Cys-24, Cys-60, Cys-89, Cys-161, Cys-165, and Cys-168 each coordinate [4Fe-4S] cluster. In terms of domain architecture, Radical SAM core spans 147–392 (LTPRHYAYLK…MEVAEEVSAA (246 aa)). The TRAM domain maps to 395–463 (ARKIGKTLKV…ADSHDLWGEV (69 aa)).

The protein belongs to the methylthiotransferase family. RimO subfamily. Requires [4Fe-4S] cluster as cofactor.

The protein resides in the cytoplasm. The catalysed reaction is L-aspartate(89)-[ribosomal protein uS12]-hydrogen + (sulfur carrier)-SH + AH2 + 2 S-adenosyl-L-methionine = 3-methylsulfanyl-L-aspartate(89)-[ribosomal protein uS12]-hydrogen + (sulfur carrier)-H + 5'-deoxyadenosine + L-methionine + A + S-adenosyl-L-homocysteine + 2 H(+). Functionally, catalyzes the methylthiolation of an aspartic acid residue of ribosomal protein uS12. This chain is Ribosomal protein uS12 methylthiotransferase RimO, found in Burkholderia pseudomallei (strain 668).